A 243-amino-acid chain; its full sequence is MRVLTIIPTYNEIESLPLTLGRLRDAVPESDVLVVDDASPDGTGDWADTRAAEDPSVHVLHRTTKDGLGGAYIAGFRWGLERGYDVLVEMDADGSHQPEQLPRLLEAVRTADLVIGSRRVPGGKMVNWPTSRKMISWAGSLYPRIMLGLNLTDITAGYRAYRADTLRAIDLDAIESKGYGFQVDMTFRTARLGKRIVEVPITFVERELGESKMSGGIVGEAVVNVTRWGLAARWEGLRARLGL.

The protein belongs to the glycosyltransferase 2 family.

The catalysed reaction is di-trans,octa-cis-undecaprenyl phosphate + GDP-alpha-D-mannose = D-mannosyl di-trans,octa-cis-undecaprenyl phosphate + GDP. Its function is as follows. Catalyzes the transfer of mannose from GDP-mannose to D-mannosyl-1-phosphoundecaprenol. This is Undecaprenyl-phosphate mannosyltransferase from Micrococcus luteus (strain ATCC 4698 / DSM 20030 / JCM 1464 / CCM 169 / CCUG 5858 / IAM 1056 / NBRC 3333 / NCIMB 9278 / NCTC 2665 / VKM Ac-2230) (Micrococcus lysodeikticus).